Consider the following 407-residue polypeptide: tRNA(Ile)-lysidine synthase (407 aa).

36–41 serves as a coordination point for ATP; sequence SGGRDS.

It belongs to the tRNA(Ile)-lysidine synthase family.

The protein localises to the cytoplasm. It catalyses the reaction cytidine(34) in tRNA(Ile2) + L-lysine + ATP = lysidine(34) in tRNA(Ile2) + AMP + diphosphate + H(+). Its function is as follows. Ligates lysine onto the cytidine present at position 34 of the AUA codon-specific tRNA(Ile) that contains the anticodon CAU, in an ATP-dependent manner. Cytidine is converted to lysidine, thus changing the amino acid specificity of the tRNA from methionine to isoleucine. In Tropheryma whipplei (strain TW08/27) (Whipple's bacillus), this protein is tRNA(Ile)-lysidine synthase.